We begin with the raw amino-acid sequence, 171 residues long: Probable deoxyuridine 5'-triphosphate nucleotidohydrolase (171 aa).

It belongs to the dCTP deaminase family. Archaeal dUTPase subfamily.

It carries out the reaction dUTP + H2O = dUMP + diphosphate + H(+). It participates in pyrimidine metabolism; dUMP biosynthesis; dUMP from dCTP (dUTP route): step 2/2. Functionally, this enzyme is involved in nucleotide metabolism: it produces dUMP, the immediate precursor of thymidine nucleotides and it decreases the intracellular concentration of dUTP so that uracil cannot be incorporated into DNA. In Methanosarcina barkeri (strain Fusaro / DSM 804), this protein is Probable deoxyuridine 5'-triphosphate nucleotidohydrolase.